The following is a 508-amino-acid chain: Pancreatic alpha-amylase 2a5 (508 aa).

Residues 1–15 (MKFVLLLSLIGFCWA) form the signal peptide. Glutamine 16 carries the post-translational modification Pyrrolidone carboxylic acid. 3 disulfides stabilise this stretch: cysteine 43–cysteine 101, cysteine 85–cysteine 130, and cysteine 156–cysteine 172. Ca(2+) contacts are provided by asparagine 115, arginine 170, and aspartate 179. Arginine 207 is a chloride binding site. Aspartate 209 functions as the Nucleophile in the catalytic mechanism. Histidine 213 contacts Ca(2+). Catalysis depends on glutamate 245, which acts as the Proton donor. Residues asparagine 310 and arginine 349 each coordinate chloride. Cystine bridges form between cysteine 390-cysteine 396 and cysteine 462-cysteine 474.

It belongs to the glycosyl hydrolase 13 family. Monomer. It depends on Ca(2+) as a cofactor. Chloride is required as a cofactor.

Its subcellular location is the secreted. The protein resides in the extracellular space. The catalysed reaction is Endohydrolysis of (1-&gt;4)-alpha-D-glucosidic linkages in polysaccharides containing three or more (1-&gt;4)-alpha-linked D-glucose units.. This chain is Pancreatic alpha-amylase 2a5, found in Mus musculus (Mouse).